We begin with the raw amino-acid sequence, 488 residues long: Ribulose bisphosphate carboxylase large chain (488 aa).

Substrate contacts are provided by asparagine 127 and threonine 177. Lysine 179 acts as the Proton acceptor in catalysis. Position 181 (lysine 181) interacts with substrate. Mg(2+) contacts are provided by lysine 205, aspartate 207, and glutamate 208. Lysine 205 carries the N6-carboxylysine modification. Residue histidine 297 is the Proton acceptor of the active site. Substrate-binding residues include arginine 298, histidine 330, and serine 382.

This sequence belongs to the RuBisCO large chain family. Type I subfamily. As to quaternary structure, heterohexadecamer of 8 large chains and 8 small chains. Mg(2+) is required as a cofactor.

Its subcellular location is the plastid. The protein localises to the chloroplast. It carries out the reaction 2 (2R)-3-phosphoglycerate + 2 H(+) = D-ribulose 1,5-bisphosphate + CO2 + H2O. The catalysed reaction is D-ribulose 1,5-bisphosphate + O2 = 2-phosphoglycolate + (2R)-3-phosphoglycerate + 2 H(+). Its function is as follows. RuBisCO catalyzes two reactions: the carboxylation of D-ribulose 1,5-bisphosphate, the primary event in carbon dioxide fixation, as well as the oxidative fragmentation of the pentose substrate in the photorespiration process. Both reactions occur simultaneously and in competition at the same active site. This Cyanidioschyzon merolae (strain NIES-3377 / 10D) (Unicellular red alga) protein is Ribulose bisphosphate carboxylase large chain.